Reading from the N-terminus, the 385-residue chain is MTQAFNERIAQALKQRREQGLSRQSEVIFSGNQTVLEHQGKRYLNFSANDYLGLANDQSLVRAWQQGLSLYGCGSGASPLVTGYTPAHSNLAASLCDWLGYESATLFGSGFSANQALLFALLEKGDLLVQDKLNHASLIEAGLLSPATMKRFKHNDLKALDTILNRSDCPSLVVTEGVFSMDGDCSPLAEMHALTQRHSASLMVDDAHGVGVLGEEGRGSCALASVKPDFLVVTFGKAFGLSGAALLTDKSSGDFLAQFARHHVYSTALPPAQAFALTHAVEMIRTQQWRRDKLNELQTLFAEYLGEHDSFVATQTPIKPWLIGETQQAVMVAQRCREQGIWLTAIRPPTVPQNTARLRITLSANHTKEQMHTLAQVLLTVTGEH.

Arg23 contacts substrate. Pyridoxal 5'-phosphate is bound at residue 110 to 111; the sequence is GF. His135 contacts substrate. 3 residues coordinate pyridoxal 5'-phosphate: Ser180, His208, and Thr234. Lys237 carries the N6-(pyridoxal phosphate)lysine modification. Residue Thr350 coordinates substrate.

Belongs to the class-II pyridoxal-phosphate-dependent aminotransferase family. BioF subfamily. In terms of assembly, homodimer. Pyridoxal 5'-phosphate is required as a cofactor.

The catalysed reaction is 6-carboxyhexanoyl-[ACP] + L-alanine + H(+) = (8S)-8-amino-7-oxononanoate + holo-[ACP] + CO2. It participates in cofactor biosynthesis; biotin biosynthesis. Catalyzes the decarboxylative condensation of pimeloyl-[acyl-carrier protein] and L-alanine to produce 8-amino-7-oxononanoate (AON), [acyl-carrier protein], and carbon dioxide. This is 8-amino-7-oxononanoate synthase from Vibrio vulnificus (strain CMCP6).